The following is a 251-amino-acid chain: Adenosylcobinamide-GDP ribazoletransferase (251 aa).

The next 7 helical transmembrane spans lie at 36–56 (LYPFIGLIIGALWYLSFFVLS), 60–80 (VPIMLMAALILTVPYILTGFL), 110–130 (VGAFSVISVVLLLLVEFAGMF), 141–161 (VLIFIPIASRAINGYFIVSQE), 181–201 (EIILLGIYVLVALITFFTLGI), 202–222 (NYLIAILAMGLISFILLLKVK), and 231–251 (DVAGYILVLMEFTGILLLGII).

It belongs to the CobS family. The cofactor is Mg(2+).

The protein resides in the cell membrane. The enzyme catalyses alpha-ribazole + adenosylcob(III)inamide-GDP = adenosylcob(III)alamin + GMP + H(+). The catalysed reaction is alpha-ribazole 5'-phosphate + adenosylcob(III)inamide-GDP = adenosylcob(III)alamin 5'-phosphate + GMP + H(+). It functions in the pathway cofactor biosynthesis; adenosylcobalamin biosynthesis; adenosylcobalamin from cob(II)yrinate a,c-diamide: step 7/7. Its function is as follows. Joins adenosylcobinamide-GDP and alpha-ribazole to generate adenosylcobalamin (Ado-cobalamin). Also synthesizes adenosylcobalamin 5'-phosphate from adenosylcobinamide-GDP and alpha-ribazole 5'-phosphate. This is Adenosylcobinamide-GDP ribazoletransferase from Clostridium perfringens (strain 13 / Type A).